The chain runs to 152 residues: Transcriptional regulator MraZ (152 aa).

SpoVT-AbrB domains lie at Ala-5–Glu-52 and Ala-81–Thr-124.

This sequence belongs to the MraZ family. In terms of assembly, forms oligomers.

It is found in the cytoplasm. The protein localises to the nucleoid. Negatively regulates its own expression and that of the subsequent genes in the proximal part of the division and cell wall (dcw) gene cluster. Acts by binding directly to DNA. May also regulate the expression of genes outside the dcw cluster. The polypeptide is Transcriptional regulator MraZ (Yersinia pestis bv. Antiqua (strain Antiqua)).